A 590-amino-acid polypeptide reads, in one-letter code: Oligoendopeptidase F homolog (590 aa).

His-381 contacts Zn(2+). Glu-382 is a catalytic residue. Residues His-385 and His-388 each coordinate Zn(2+).

Belongs to the peptidase M3B family. Zn(2+) serves as cofactor.

The chain is Oligoendopeptidase F homolog (pepF) from Borreliella burgdorferi (strain ATCC 35210 / DSM 4680 / CIP 102532 / B31) (Borrelia burgdorferi).